The chain runs to 652 residues: Large subunit GTPase 1 homolog (652 aa).

Serine 93 carries the post-translational modification Phosphoserine. The region spanning 164–438 (WRQLWRVIER…LCDCPGLVMP (275 aa)) is the CP-type G domain. 212 to 215 (NKAD) contributes to the GTP binding site. Position 252 is a phosphoserine (serine 252). The disordered stretch occupies residues 288–347 (LGEAASSEEDESEYEDCQEEEEDWQTCLEDSSSSDEEACGQDCKEGHTVDSEAQGRNTPQ). The span at 293–311 (SSEEDESEYEDCQEEEEDW) shows a compositional bias: acidic residues. Residues 387-394 (GYPNVGKS) and 431-434 (DCPG) each bind GTP. A disordered region spans residues 625–652 (RGAGKPWKKHGNRNKKEKSRRLYKHLDM). The span at 630 to 652 (PWKKHGNRNKKEKSRRLYKHLDM) shows a compositional bias: basic residues.

This sequence belongs to the TRAFAC class YlqF/YawG GTPase family. LSG1 subfamily.

The protein localises to the cytoplasm. It is found in the endoplasmic reticulum. Its subcellular location is the nucleus. It localises to the cajal body. The catalysed reaction is GTP + H2O = GDP + phosphate + H(+). Functionally, functions as a GTPase. May act by mediating the release of NMD3 from the 60S ribosomal subunit after export into the cytoplasm during the 60S ribosomal subunit maturation. The polypeptide is Large subunit GTPase 1 homolog (Bos taurus (Bovine)).